The primary structure comprises 89 residues: Cell division protein FtsL (89 aa).

Over 1 to 22 (MIDRKHYHLVGSIGKDILNNGK) the chain is Cytoplasmic. The helical transmembrane segment at 23–40 (LPALLLIAVLASSSLVVI) threads the bilayer. Topologically, residues 41 to 89 (TTYQTRRLTVEREQLLLEQNILDIEWRNLILEDNVISDQSRFEFVATEQ) are periplasmic.

The protein belongs to the FtsL family. In terms of assembly, part of a complex composed of FtsB, FtsL and FtsQ.

The protein resides in the cell inner membrane. Its function is as follows. Essential cell division protein. May link together the upstream cell division proteins, which are predominantly cytoplasmic, with the downstream cell division proteins, which are predominantly periplasmic. This is Cell division protein FtsL from Moranella endobia (strain PCIT).